Here is a 455-residue protein sequence, read N- to C-terminus: Bifunctional protein GlmU (455 aa).

Residues 1–225 (MNIVILAAGM…EWETLGVNSK (225 aa)) are pyrophosphorylase. UDP-N-acetyl-alpha-D-glucosamine is bound by residues 6–9 (LAAG), Lys20, Gln71, 76–77 (GT), 98–100 (YGD), Gly135, Glu150, Asn165, and Asn223. Asp100 contacts Mg(2+). Asn223 serves as a coordination point for Mg(2+). Positions 226–246 (VQLAELERIHQRNLAQQLLED) are linker. The segment at 247–455 (GVTLIDPARI…QRPVKQKKEG (209 aa)) is N-acetyltransferase. UDP-N-acetyl-alpha-D-glucosamine contacts are provided by Arg329 and Lys347. The active-site Proton acceptor is the His359. UDP-N-acetyl-alpha-D-glucosamine-binding residues include Tyr362 and Asn373. Acetyl-CoA contacts are provided by residues Ala376, 382–383 (NY), Ser401, Ala419, and Arg436.

The protein in the N-terminal section; belongs to the N-acetylglucosamine-1-phosphate uridyltransferase family. It in the C-terminal section; belongs to the transferase hexapeptide repeat family. Homotrimer. It depends on Mg(2+) as a cofactor.

It localises to the cytoplasm. The enzyme catalyses alpha-D-glucosamine 1-phosphate + acetyl-CoA = N-acetyl-alpha-D-glucosamine 1-phosphate + CoA + H(+). The catalysed reaction is N-acetyl-alpha-D-glucosamine 1-phosphate + UTP + H(+) = UDP-N-acetyl-alpha-D-glucosamine + diphosphate. It functions in the pathway nucleotide-sugar biosynthesis; UDP-N-acetyl-alpha-D-glucosamine biosynthesis; N-acetyl-alpha-D-glucosamine 1-phosphate from alpha-D-glucosamine 6-phosphate (route II): step 2/2. Its pathway is nucleotide-sugar biosynthesis; UDP-N-acetyl-alpha-D-glucosamine biosynthesis; UDP-N-acetyl-alpha-D-glucosamine from N-acetyl-alpha-D-glucosamine 1-phosphate: step 1/1. The protein operates within bacterial outer membrane biogenesis; LPS lipid A biosynthesis. Its function is as follows. Catalyzes the last two sequential reactions in the de novo biosynthetic pathway for UDP-N-acetylglucosamine (UDP-GlcNAc). The C-terminal domain catalyzes the transfer of acetyl group from acetyl coenzyme A to glucosamine-1-phosphate (GlcN-1-P) to produce N-acetylglucosamine-1-phosphate (GlcNAc-1-P), which is converted into UDP-GlcNAc by the transfer of uridine 5-monophosphate (from uridine 5-triphosphate), a reaction catalyzed by the N-terminal domain. In Ralstonia pickettii (strain 12J), this protein is Bifunctional protein GlmU.